Here is a 396-residue protein sequence, read N- to C-terminus: Elongation factor Tu (396 aa).

A tr-type G domain is found at 10 to 206 (KPHVNVGTIG…ALDTYIPTPE (197 aa)). A G1 region spans residues 19 to 26 (GHVDHGKT). Residue 19–26 (GHVDHGKT) participates in GTP binding. Threonine 26 is a binding site for Mg(2+). Positions 60 to 64 (GITIN) are G2. The segment at 81–84 (DCPG) is G3. Residues 81 to 85 (DCPGH) and 136 to 139 (NKCD) contribute to the GTP site. The interval 136–139 (NKCD) is G4. The interval 174 to 176 (SAK) is G5.

It belongs to the TRAFAC class translation factor GTPase superfamily. Classic translation factor GTPase family. EF-Tu/EF-1A subfamily. In terms of assembly, monomer.

The protein localises to the cytoplasm. It catalyses the reaction GTP + H2O = GDP + phosphate + H(+). Its function is as follows. GTP hydrolase that promotes the GTP-dependent binding of aminoacyl-tRNA to the A-site of ribosomes during protein biosynthesis. The protein is Elongation factor Tu of Burkholderia cepacia (Pseudomonas cepacia).